The sequence spans 632 residues: Polyadenylate-binding protein, cytoplasmic and nuclear (632 aa).

Over residues 1 to 11 (MSAADANQLQE) the composition is skewed to polar residues. The tract at residues 1–43 (MSAADANQLQESLEKLNLDSAPAAAEEEAVAAESAPAGEEGAD) is disordered. Over residues 31–43 (AAESAPAGEEGAD) the composition is skewed to low complexity. RRM domains are found at residues 52-130 (ASLY…WSQR), 140-217 (GNIF…KHIS), 233-310 (TNIY…RAQK), and 336-413 (VNLF…LAQR). One can recognise a PABC domain in the interval 534–615 (QQRDLAAIIA…ALTAFEEYKN (82 aa)).

Belongs to the polyadenylate-binding protein type-1 family.

It localises to the cytoplasm. The protein localises to the nucleus. Its function is as follows. Binds the poly(A) tail of mRNA. Appears to be an important mediator of the multiple roles of the poly(A) tail in mRNA biogenesis, stability and translation. In the nucleus, involved in both mRNA cleavage and polyadenylation. Is also required for efficient mRNA export to the cytoplasm. Acts in concert with a poly(A)-specific nuclease (PAN) to affect poly(A) tail shortening, which may occur concomitantly with either nucleocytoplasmic mRNA transport or translational initiation. In the cytoplasm, stimulates translation initiation and regulates mRNA decay through translation termination-coupled poly(A) shortening, probably mediated by PAN. This is Polyadenylate-binding protein, cytoplasmic and nuclear (PAB1) from Scheffersomyces stipitis (strain ATCC 58785 / CBS 6054 / NBRC 10063 / NRRL Y-11545) (Yeast).